An 838-amino-acid polypeptide reads, in one-letter code: E3 ubiquitin-protein ligase RNF19A (838 aa).

Positions 128–351 are TRIAD supradomain; sequence DFIECPLCLL…LSPSGCTFWG (224 aa). The Zn(2+) site is built by Cys132, Cys135, Cys150, His152, Cys155, Cys158, Cys176, Cys179, Cys219, Cys224, Cys241, Cys246, Cys251, Cys254, His259, Cys264, Cys301, and Cys304. The RING-type 1 zinc-finger motif lies at 132-179; the sequence is CPLCLLRHSKDRFPEIMTCHHRSCVDCLRQYLRIEISESRVNISCPEC. Residues 199–264 form an IBR-type zinc finger; sequence EKYEEFMLRR…KQIWHPNQTC (66 aa). The segment at 301 to 332 adopts an RING-type 2; atypical zinc-finger fold; it reads CPRCAAYIIKMNDGSCNHMTCAVCGCEFCWLC. Residue Cys316 is part of the active site. Cys321, Cys324, Cys329, Cys332, His340, and Cys347 together coordinate Zn(2+). 2 consecutive transmembrane segments (helical) span residues 368-388 and 424-444; these read LVGA…AMII and VIVS…IMLA. Disordered regions lie at residues 622–685 and 700–721; these read SKPS…SNMK and QQST…PSVA. Position 631 is a phosphoserine (Ser631). The segment covering 631 to 644 has biased composition (low complexity); sequence SGSSSVDDGSAARS. The segment at 660–838 is interaction with CASR; the sequence is ATKWSKEATA…ELKVAIQTDI (179 aa). Over residues 671–683 the composition is skewed to basic residues; that stretch reads KKSKSGKLRKKSN. Polar residues predominate over residues 700–717; that stretch reads QQSTNSSEFEAPSLSDSM.

This sequence belongs to the RBR family. RNF19 subfamily. Interacts with UBE2L3 and UBE2L6. Also interacts with transcription factor Sp1. Interacts with SNCAIP, CASR and VCP.

It is found in the membrane. The protein resides in the cytoplasm. The protein localises to the cytoskeleton. It localises to the microtubule organizing center. Its subcellular location is the centrosome. It carries out the reaction [E2 ubiquitin-conjugating enzyme]-S-ubiquitinyl-L-cysteine + [acceptor protein]-L-lysine = [E2 ubiquitin-conjugating enzyme]-L-cysteine + [acceptor protein]-N(6)-ubiquitinyl-L-lysine.. The protein operates within protein modification; protein ubiquitination. Functionally, E3 ubiquitin-protein ligase which accepts ubiquitin from E2 ubiquitin-conjugating enzymes UBE2L3 and UBE2L6 in the form of a thioester and then directly transfers the ubiquitin to targeted substrates, such as SNCAIP or CASR. The chain is E3 ubiquitin-protein ligase RNF19A (RNF19A) from Sus scrofa (Pig).